Reading from the N-terminus, the 221-residue chain is Chaperone protein TorD (221 aa).

This sequence belongs to the TorD/DmsD family. TorD subfamily.

The protein localises to the cytoplasm. In terms of biological role, involved in the biogenesis of TorA. Acts on TorA before the insertion of the molybdenum cofactor and, as a result, probably favors a conformation of the apoenzyme that is competent for acquiring the cofactor. The protein is Chaperone protein TorD of Psychrobacter sp. (strain PRwf-1).